The following is a 352-amino-acid chain: Pejvakin (352 aa).

Belongs to the gasdermin family. As to quaternary structure, interacts with MAP1LC3B; interaction is direct. Interacts with IQGAP1. Interacts with ROCK2. Interacts with TRIOBP. In ear, it is detected in the organ of Corti and the spiral ganglion within the cochlea in the sensory areas of the vestibule (cristae ampullares of the semicircular ducts, and maculae of the saccule and utricle) and in the first 3 relays (cochlear nuclei, superior olivary complex and inferior colliculus) of the afferent auditory pathway. Detected in hair cells of the cochlea and vestibule but not in neurons. In the afferent auditory pathway, it is present in the cell bodies of neurons but not in fiber bundles such as the trapezoid body in the brainstem. Also detected in spiral ganglion cells, which form the auditory nerve and project to the cochlear nuclei in the brainstem. Also present in the cochlear nuclei, the superior olive and the inferior colliculus (at protein level). Expressed in all the adult organs tested: brain, eye, inner ear, heart, lung, kidney, liver, intestine, testis and weakly in skeletal muscle.

Its subcellular location is the peroxisome membrane. It localises to the cell projection. It is found in the cilium. Peroxisome-associated protein required to protect auditory hair cells against noise-induced damage. Acts by regulating noise-induced peroxisome proliferation in auditory hair cells and neurons, and promoting autophagic degradation of damaged peroxisomes (pexophagy). Noise overexposure increases reactive oxygen species (ROS) levels, causing oxidative damage to auditory hair cells and resulting in hearing loss. PJVK acts as a ROS sensor that recruits the autophagy machinery to trigger pexophagy of peroxisomes damaged by oxidative stress. In addition to pexophagy, also required to promote peroxisome proliferation in response to sound overstimulation. This chain is Pejvakin, found in Mus musculus (Mouse).